We begin with the raw amino-acid sequence, 76 residues long: U10-ctenitoxin-Pn1a (76 aa).

The first 15 residues, 1-15 (SFVFYLFTLITVVRA), serve as a signal peptide directing secretion. The propeptide occupies 16–36 (EEFILENEAEDIAPAVHGESG). 4 cysteine pairs are disulfide-bonded: C39-C54, C46-C59, C53-C73, and C61-C71.

It belongs to the neurotoxin 02 (plectoxin) family. 09 subfamily. As to expression, expressed by the venom gland.

It is found in the secreted. The protein is U10-ctenitoxin-Pn1a of Phoneutria nigriventer (Brazilian armed spider).